A 315-amino-acid chain; its full sequence is Putative peptide transport system permease protein BMEII0209 (315 aa).

A run of 6 helical transmembrane segments spans residues 13-33 (AIPV…LLPG), 102-122 (LALL…VVAA), 136-156 (LALL…VILF), 178-198 (WLRS…GYLA), 238-258 (VSVL…SVVI), and 287-307 (MLFL…LYTI). Residues 96–305 (LPVTISLALL…AINVLVDILY (210 aa)) form the ABC transmembrane type-1 domain.

It belongs to the binding-protein-dependent transport system permease family. In terms of assembly, the complex is composed of two ATP-binding proteins (BMEII0205 and BMEII0206), two transmembrane proteins (BMEII0207/BMEII0208 and BMEII0209) and a solute-binding protein (BMEII0210).

It is found in the cell inner membrane. Its function is as follows. Probably part of an ABC transporter complex that could be involved in peptide import. Probably responsible for the translocation of the substrate across the membrane. The polypeptide is Putative peptide transport system permease protein BMEII0209 (Brucella melitensis biotype 1 (strain ATCC 23456 / CCUG 17765 / NCTC 10094 / 16M)).